The following is a 431-amino-acid chain: Adenylosuccinate synthetase (431 aa).

GTP is bound by residues 12 to 18 (GDEGKGK) and 40 to 42 (GHS). Residue aspartate 13 is the Proton acceptor of the active site. Mg(2+) is bound by residues aspartate 13 and glycine 40. IMP contacts are provided by residues 13 to 16 (DEGK) and 38 to 41 (NAGH). The active-site Proton donor is histidine 41. Residues 114-133 (QQQERDRSKNGEKIGTTNKG) are disordered. The segment covering 115–125 (QQERDRSKNGE) has biased composition (basic and acidic residues). Residues threonine 130, arginine 144, glutamine 225, threonine 240, and arginine 304 each contribute to the IMP site. Residue 300–306 (TVTKRPR) coordinates substrate. Residues arginine 306, 332 to 334 (CLD), and 414 to 416 (SIG) each bind GTP.

The protein belongs to the adenylosuccinate synthetase family. Homodimer. Mg(2+) serves as cofactor.

Its subcellular location is the cytoplasm. It catalyses the reaction IMP + L-aspartate + GTP = N(6)-(1,2-dicarboxyethyl)-AMP + GDP + phosphate + 2 H(+). The protein operates within purine metabolism; AMP biosynthesis via de novo pathway; AMP from IMP: step 1/2. In terms of biological role, plays an important role in the de novo pathway of purine nucleotide biosynthesis. Catalyzes the first committed step in the biosynthesis of AMP from IMP. The sequence is that of Adenylosuccinate synthetase from Pediococcus pentosaceus (strain ATCC 25745 / CCUG 21536 / LMG 10740 / 183-1w).